The primary structure comprises 78 residues: MSRVCQVTGKRPVTGNNRSHALNATKRRFLPNLHSHRFWVEGEKRFVTLRVSAKGMRVIDKKGIEAVLADLRARGEKY.

It belongs to the bacterial ribosomal protein bL28 family.

This chain is Large ribosomal subunit protein bL28, found in Edwardsiella ictaluri (strain 93-146).